The chain runs to 261 residues: UPF0246 protein PMI0005 (261 aa).

This sequence belongs to the UPF0246 family.

The sequence is that of UPF0246 protein PMI0005 from Proteus mirabilis (strain HI4320).